A 324-amino-acid chain; its full sequence is Galectin-4 (324 aa).

Galectin domains are found at residues 19–150 and 196–324; these read YKRP…INFL and YVGT…YVQI. A beta-D-galactoside is bound at residue 257–263; it reads WGSEERK. Ser-259 carries the phosphoserine modification.

In terms of assembly, monomer. As to expression, highly expressed in full-length form in small and large intestine and stomach but was not detected in other tissues including lung, liver, kidney and spleen.

Functionally, galectin that binds lactose and a related range of sugars. The polypeptide is Galectin-4 (Lgals4) (Rattus norvegicus (Rat)).